The following is a 94-amino-acid chain: Large ribosomal subunit protein uL23 (94 aa).

The protein belongs to the universal ribosomal protein uL23 family. In terms of assembly, part of the 50S ribosomal subunit. Contacts protein L29, and trigger factor when it is bound to the ribosome.

In terms of biological role, one of the early assembly proteins it binds 23S rRNA. One of the proteins that surrounds the polypeptide exit tunnel on the outside of the ribosome. Forms the main docking site for trigger factor binding to the ribosome. In Geobacter metallireducens (strain ATCC 53774 / DSM 7210 / GS-15), this protein is Large ribosomal subunit protein uL23.